Reading from the N-terminus, the 324-residue chain is MSILHNIVSKKELKRRMFFETEPRLTLSFYKYFFIKNTQEYRDRLYKTFYKYNVLGRIYVASEGINAQISVPKKYYSILKKFLYNFDIELNNLRINKSLDNEKSFWVLCVKIKKKIVQDGIKEHFFNPNNVGIYIQSEQVNSMLNDKKTIFIDMRNSYEYAIGHFENAIEIKSITFREQLKKVIQLMAYAKNKKIVMYCTGGIRCEKATSWMLFNGFKHVYHLEGGIIGYVHDARKNGLPVLFKGKSFVFDNRMSEKISDEVISYCKQCGKSSDVYINCKYSSCHLLFIQCENCSVKFHSCCSLECMKKYKFYMLNNDLKKISY.

The Rhodanese domain maps to 145 to 239; sequence NDKKTIFIDM…YVHDARKNGL (95 aa). Catalysis depends on Cys199, which acts as the Cysteine persulfide intermediate.

Belongs to the TrhO family.

The catalysed reaction is uridine(34) in tRNA + AH2 + O2 = 5-hydroxyuridine(34) in tRNA + A + H2O. Its function is as follows. Catalyzes oxygen-dependent 5-hydroxyuridine (ho5U) modification at position 34 in tRNAs. The chain is tRNA uridine(34) hydroxylase from Buchnera aphidicola subsp. Acyrthosiphon pisum (strain APS) (Acyrthosiphon pisum symbiotic bacterium).